We begin with the raw amino-acid sequence, 233 residues long: Ribose-5-phosphate isomerase A (233 aa).

Substrate contacts are provided by residues 28–31, 83–86, and 96–99; these read SGST, DGAD, and KGGG. E105 acts as the Proton acceptor in catalysis. K123 contributes to the substrate binding site.

Belongs to the ribose 5-phosphate isomerase family. Homodimer.

It carries out the reaction aldehydo-D-ribose 5-phosphate = D-ribulose 5-phosphate. Its pathway is carbohydrate degradation; pentose phosphate pathway; D-ribose 5-phosphate from D-ribulose 5-phosphate (non-oxidative stage): step 1/1. Its function is as follows. Catalyzes the reversible conversion of ribose-5-phosphate to ribulose 5-phosphate. The sequence is that of Ribose-5-phosphate isomerase A from Maricaulis maris (strain MCS10) (Caulobacter maris).